We begin with the raw amino-acid sequence, 373 residues long: MEGKEGPPCEVRLPTPGAEREGPVHPELGAFGESASDAIKLSETSNDAKKEEIEEELDPRIQEELERLNQASEEINLLELQLDEARTAYRRILTESARRLNGLATQLGACIDKARPYYEARRLAKEAQQDTHSAALRYERAVSMHAAAREMVFVAEQGVTADKNRLDPTWQEMLNHATCKVNEAEEERLRSEFEHQRVTRLCHEAEAKVQTLQKSLKRLIIKSRPYFELKAQLNTILEEHKSRVTLLENSVAQAKLRYSGTLHNLEKISEEIHARRTQSSVLSQRAPPLGAEAPPSVKDGETGPPADTVSLLSLQTIASDLQKSDSVEHLRDLTDVTSLDGRETGAVESGGSRERGEDRGTGGAFRHHRSVSL.

Residues 1-36 (MEGKEGPPCEVRLPTPGAEREGPVHPELGAFGESAS) are disordered. 2 coiled-coil regions span residues 35 to 98 (ASDA…ESAR) and 170 to 258 (WQEM…KLRY). Disordered stretches follow at residues 274-308 (ARRTQSSVLSQRAPPLGAEAPPSVKDGETGPPADT) and 332-373 (DLTD…SVSL). Residues 332 to 360 (DLTDVTSLDGRETGAVESGGSRERGEDRG) are compositionally biased toward basic and acidic residues.

The protein belongs to the SH3BP5 family.

Functions as a guanine nucleotide exchange factor (GEF) for rab11a. This chain is SH3 domain-binding protein 5-like (sh3bp5l), found in Xenopus laevis (African clawed frog).